The sequence spans 124 residues: Large ribosomal subunit protein eL22y (124 aa).

Belongs to the eukaryotic ribosomal protein eL22 family.

The sequence is that of Large ribosomal subunit protein eL22y (RPL22C) from Arabidopsis thaliana (Mouse-ear cress).